Here is a 352-residue protein sequence, read N- to C-terminus: Peptide chain release factor 1 (352 aa).

N5-methylglutamine is present on glutamine 233. Residues asparagine 288–asparagine 309 are disordered. Over residues alanine 289–arginine 306 the composition is skewed to basic and acidic residues.

It belongs to the prokaryotic/mitochondrial release factor family. In terms of processing, methylated by PrmC. Methylation increases the termination efficiency of RF1.

The protein localises to the cytoplasm. Peptide chain release factor 1 directs the termination of translation in response to the peptide chain termination codons UAG and UAA. This Helicobacter pylori (strain Shi470) protein is Peptide chain release factor 1.